The sequence spans 118 residues: Large ribosomal subunit protein bL20 (118 aa).

This sequence belongs to the bacterial ribosomal protein bL20 family.

Its function is as follows. Binds directly to 23S ribosomal RNA and is necessary for the in vitro assembly process of the 50S ribosomal subunit. It is not involved in the protein synthesizing functions of that subunit. This chain is Large ribosomal subunit protein bL20, found in Psychromonas ingrahamii (strain DSM 17664 / CCUG 51855 / 37).